The sequence spans 299 residues: Ophiobolin family sesterterpenoid biosynthesis cluster acetyltransferase (299 aa).

Positions 1–20 (MYFFRALLSPVVLWPALVSG) are cleaved as a signal peptide. N-linked (GlcNAc...) asparagine glycans are attached at residues asparagine 28, asparagine 58, asparagine 77, asparagine 126, asparagine 177, asparagine 212, and asparagine 282.

It belongs to the bfoA family.

It participates in secondary metabolite biosynthesis; terpenoid biosynthesis. Its function is as follows. Acetyltransferase; part of the gene cluster that mediates the biosynthesis of an ophiobolin family sesterterpenoid. Functionally, sesterterpenoid synthase; part of the gene cluster that mediates the biosynthesis of an ophiobolin family sesterterpenoid. This chain is Ophiobolin family sesterterpenoid biosynthesis cluster acetyltransferase, found in Aspergillus terreus.